The primary structure comprises 232 residues: Zinc finger protein RTS2 (232 aa).

A C2H2-type zinc finger spans residues 24-48 (YYCQICQRQCKDANGFQSHNKSPSH). Disordered regions lie at residues 180-199 (AKRQ…ISGD) and 211-232 (GNGR…IKFR).

Its subcellular location is the nucleus. This chain is Zinc finger protein RTS2 (RTS2), found in Saccharomyces cerevisiae (strain ATCC 204508 / S288c) (Baker's yeast).